A 580-amino-acid chain; its full sequence is DNA mismatch repair protein MutL (580 aa).

This sequence belongs to the DNA mismatch repair MutL/HexB family.

In terms of biological role, this protein is involved in the repair of mismatches in DNA. It is required for dam-dependent methyl-directed DNA mismatch repair. May act as a 'molecular matchmaker', a protein that promotes the formation of a stable complex between two or more DNA-binding proteins in an ATP-dependent manner without itself being part of a final effector complex. This Chlamydia caviae (strain ATCC VR-813 / DSM 19441 / 03DC25 / GPIC) (Chlamydophila caviae) protein is DNA mismatch repair protein MutL.